A 121-amino-acid chain; its full sequence is Protein FAM241B (121 aa).

Residues 12–58 (QDDDPRVRTTTQPPRGSIPRQSFFNRGHGAPPGGPGPRQQQAGARLG) are disordered. Positions 19–35 (RTTTQPPRGSIPRQSFF) are enriched in polar residues. S33 carries the post-translational modification Phosphoserine. The segment covering 48 to 58 (PRQQQAGARLG) has biased composition (low complexity). S62 is modified (phosphoserine). The helical transmembrane segment at 92–112 (ILLLFLLMMLGVRGLLLVGLV) threads the bilayer.

Belongs to the FAM241 family.

It localises to the membrane. Its function is as follows. May play a role in lysosome homeostasis. In Homo sapiens (Human), this protein is Protein FAM241B.